The chain runs to 533 residues: MFLAVLYCLLWSFQISDGHFPRACASSKNLLAKECCPPWMGDGSPCGQLSGRGSCQDILLSSAPSGPQFPFKGVDDRESWPSVFYNRTCQCSGNFMGFNCGNCKFGFGGPNCTEKRVLIRRNIFDLSVSEKNKFFSYLTLAKHTISSVYVIPTGTYGQMNNGSTPMFNDINIYDLFVWMHYYVSRDTLLGGSEIWRDIDFAHEAPGFLPWHRLFLLLWEQEIRELTGDENFTVPYWDWRDAENCDICTDEYLGGRHPENPNLLSPASFFSSWQIICSRSEEYNSHQVLCDGTPEGPLLRNPGNHDKAKTPRLPSSADVEFCLSLTQYESGSMDRTANFSFRNTLEGFASPLTGIADPSQSSMHNALHIFMNGTMSQVQGSANDPIFLLHHAFVDSIFEQWLRRHRPLLEVYPEANAPIGHNRDSYMVPFIPLYRNGDFFITSKDLGYDYSYLQESDPGFYRNYIEPYLEQASRIWPWLLGAALVGAVIAAALSGLSSRLCLQKKKKKKQPQEERQPLLMDKDDYHSLLYQSHL.

An N-terminal signal peptide occupies residues M1–G18. Residues H19 to P476 lie on the Lumenal, melanosome side of the membrane. N-linked (GlcNAc...) asparagine glycans are attached at residues N86, N111, and N161. H180, H202, and H211 together coordinate Cu cation. 2 N-linked (GlcNAc...) asparagine glycosylation sites follow: N230 and N337. Cu cation contacts are provided by H363 and H367. A glycan (N-linked (GlcNAc...) asparagine) is linked at N371. H390 is a binding site for Cu cation. The chain crosses the membrane as a helical span at residues W477 to S497. Residues R498–L533 are Cytoplasmic-facing.

Belongs to the tyrosinase family. As to quaternary structure, forms an OPN3-dependent complex with DCT in response to blue light in melanocytes. It depends on Cu(2+) as a cofactor. Post-translationally, glycosylated. As to expression, expressed in the skin.

Its subcellular location is the melanosome membrane. It localises to the melanosome. It carries out the reaction 2 L-dopa + O2 = 2 L-dopaquinone + 2 H2O. It catalyses the reaction L-tyrosine + O2 = L-dopaquinone + H2O. The catalysed reaction is 2 5,6-dihydroxyindole-2-carboxylate + O2 = 2 indole-5,6-quinone-2-carboxylate + 2 H2O. Its function is as follows. This is a copper-containing oxidase that functions in the formation of pigments such as melanins and other polyphenolic compounds. Catalyzes the initial and rate limiting step in the cascade of reactions leading to melanin production from tyrosine. In addition to hydroxylating tyrosine to DOPA (3,4-dihydroxyphenylalanine), also catalyzes the oxidation of DOPA to DOPA-quinone, and possibly the oxidation of DHI (5,6-dihydroxyindole) to indole-5,6 quinone. The protein is Tyrosinase (Tyr) of Mus musculus (Mouse).